The following is a 216-amino-acid chain: UPF0548 protein (216 aa).

The protein belongs to the UPF0548 family.

In Dictyostelium discoideum (Social amoeba), this protein is UPF0548 protein.